Reading from the N-terminus, the 70-residue chain is Cold shock-like protein (70 aa).

In terms of domain architecture, CSD spans 5–65 (GTVKWFSKDK…DTKGPRAKNV (61 aa)).

The protein resides in the cytoplasm. The sequence is that of Cold shock-like protein (csp) from Aquifex aeolicus (strain VF5).